The chain runs to 466 residues: 3-isopropylmalate dehydratase large subunit (466 aa).

3 residues coordinate [4Fe-4S] cluster: cysteine 347, cysteine 407, and cysteine 410.

It belongs to the aconitase/IPM isomerase family. LeuC type 1 subfamily. In terms of assembly, heterodimer of LeuC and LeuD. [4Fe-4S] cluster serves as cofactor.

It catalyses the reaction (2R,3S)-3-isopropylmalate = (2S)-2-isopropylmalate. It functions in the pathway amino-acid biosynthesis; L-leucine biosynthesis; L-leucine from 3-methyl-2-oxobutanoate: step 2/4. Catalyzes the isomerization between 2-isopropylmalate and 3-isopropylmalate, via the formation of 2-isopropylmaleate. This chain is 3-isopropylmalate dehydratase large subunit, found in Escherichia coli O45:K1 (strain S88 / ExPEC).